Here is a 228-residue protein sequence, read N- to C-terminus: 3-dehydroquinate dehydratase (228 aa).

Residues 30-32 (EWR) and arginine 62 each bind 3-dehydroquinate. Histidine 118 serves as the catalytic Proton donor/acceptor. Residue lysine 143 is the Schiff-base intermediate with substrate of the active site. The 3-dehydroquinate site is built by arginine 186, serine 205, and glutamine 209.

This sequence belongs to the type-I 3-dehydroquinase family. Homodimer.

The catalysed reaction is 3-dehydroquinate = 3-dehydroshikimate + H2O. It participates in metabolic intermediate biosynthesis; chorismate biosynthesis; chorismate from D-erythrose 4-phosphate and phosphoenolpyruvate: step 3/7. In terms of biological role, involved in the third step of the chorismate pathway, which leads to the biosynthesis of aromatic amino acids. Catalyzes the cis-dehydration of 3-dehydroquinate (DHQ) and introduces the first double bond of the aromatic ring to yield 3-dehydroshikimate. This Streptococcus pyogenes serotype M12 (strain MGAS9429) protein is 3-dehydroquinate dehydratase.